The chain runs to 233 residues: Biosynthetic peptidoglycan transglycosylase (233 aa).

A helical transmembrane segment spans residues 4 to 24; that stretch reads LAYLAGCLIVGVVAMQVYFFL.

It belongs to the glycosyltransferase 51 family.

The protein localises to the cell inner membrane. It carries out the reaction [GlcNAc-(1-&gt;4)-Mur2Ac(oyl-L-Ala-gamma-D-Glu-L-Lys-D-Ala-D-Ala)](n)-di-trans,octa-cis-undecaprenyl diphosphate + beta-D-GlcNAc-(1-&gt;4)-Mur2Ac(oyl-L-Ala-gamma-D-Glu-L-Lys-D-Ala-D-Ala)-di-trans,octa-cis-undecaprenyl diphosphate = [GlcNAc-(1-&gt;4)-Mur2Ac(oyl-L-Ala-gamma-D-Glu-L-Lys-D-Ala-D-Ala)](n+1)-di-trans,octa-cis-undecaprenyl diphosphate + di-trans,octa-cis-undecaprenyl diphosphate + H(+). It functions in the pathway cell wall biogenesis; peptidoglycan biosynthesis. Its function is as follows. Peptidoglycan polymerase that catalyzes glycan chain elongation from lipid-linked precursors. The sequence is that of Biosynthetic peptidoglycan transglycosylase from Cupriavidus metallidurans (strain ATCC 43123 / DSM 2839 / NBRC 102507 / CH34) (Ralstonia metallidurans).